Consider the following 94-residue polypeptide: Progonadoliberin-3 (94 aa).

The signal sequence occupies residues 1 to 23; the sequence is MEWKGRVLVQLLMLVCVLEVSLC. Pyrrolidone carboxylic acid is present on Q24. Position 33 is a glycine amide (G33).

The protein belongs to the GnRH family.

It is found in the secreted. Its function is as follows. Stimulates the secretion of gonadotropins. This chain is Progonadoliberin-3 (gnrh3), found in Rutilus rutilus (Roach).